Reading from the N-terminus, the 811-residue chain is Exocyst complex component 6B (811 aa).

Residues 50 to 119 (MEKLETRIRN…LVIAMEELKQ (70 aa)) are a coiled coil. The segment at 260–280 (STSPKSEQDSGILDVEDEEDD) is disordered.

It belongs to the SEC15 family. In terms of assembly, the exocyst complex is composed of SEC3, SEC5, SEC6, SEC8, SEC10, SEC15, EXO70 and EXO84.

In terms of biological role, component of the exocyst complex involved in the docking of exocytic vesicles with fusion sites on the plasma membrane. The protein is Exocyst complex component 6B (EXOC6B) of Homo sapiens (Human).